A 428-amino-acid chain; its full sequence is Adenylosuccinate synthetase (428 aa).

Residues 12-18 (GDEGKGK) and 40-42 (GHT) contribute to the GTP site. The Proton acceptor role is filled by Asp13. Mg(2+) is bound by residues Asp13 and Gly40. IMP is bound by residues 13–16 (DEGK), 38–41 (NAGH), Thr128, Arg142, Gln223, Thr238, and Arg302. The active-site Proton donor is His41. Residue 298–304 (VTTGRPR) coordinates substrate. Residues Arg304, 330–332 (KLD), and 412–414 (GTG) contribute to the GTP site.

It belongs to the adenylosuccinate synthetase family. Homodimer. Mg(2+) is required as a cofactor.

The protein resides in the cytoplasm. The catalysed reaction is IMP + L-aspartate + GTP = N(6)-(1,2-dicarboxyethyl)-AMP + GDP + phosphate + 2 H(+). It functions in the pathway purine metabolism; AMP biosynthesis via de novo pathway; AMP from IMP: step 1/2. In terms of biological role, plays an important role in the de novo pathway of purine nucleotide biosynthesis. Catalyzes the first committed step in the biosynthesis of AMP from IMP. The protein is Adenylosuccinate synthetase of Bifidobacterium animalis subsp. lactis (strain AD011).